We begin with the raw amino-acid sequence, 348 residues long: Protein lifeguard 1 (348 aa).

The interval 1–118 (MSHEKSFLVS…GNYQEEGPPS (118 aa)) is disordered. Residues 14–41 (YPPPNPGYPVGPQAPMPPYVQPPYPGAP) are compositionally biased toward pro residues. Residues 42-57 (YPQAAFQPSPYGQPGY) show a composition bias toward low complexity. Positions 82-101 (GPYPQSPFPPNPYGQPPPFQ) are enriched in pro residues. The next 7 membrane-spanning stretches (helical) occupy residues 142-162 (VFLVLTLQLSVTLSTVAIFTF), 174-194 (VWTYYVSYAIFFISLIVLSCC), 205-225 (LVALSILTISLSYMVGMIASF), 230-250 (AVIMAVGITTAVCFTVVIFSM), 260-280 (MGVLLVSVVVLFIFAILCIFI), 284-304 (ILEIVYASLGALLFTCFLAVD), and 323-343 (FAALNLYTDIINIFLYILTII).

The protein belongs to the BI1 family. LFG subfamily.

Its subcellular location is the membrane. In terms of biological role, potential apoptotic regulator. This chain is Protein lifeguard 1 (Grina), found in Rattus norvegicus (Rat).